The chain runs to 280 residues: Gastrula zinc finger protein XlCGF46.1 (280 aa).

C2H2-type zinc fingers lie at residues 6-28 (FACKECGKSFSNKAYFESHKLMH), 34-56 (FECTECGKQFLLKQLLKSHQLIH), 62-84 (FVCPECGQGYKSKQGLQNHLLCH), 90-112 (FTCKECGKKFLLQKHLNRHKLTH), 118-140 (FICSECGKRFSRKDGLGMHQLIH), 146-168 (YVCTECGTSFRVRPQLRIHLRTH), 174-196 (FKCEDCGRVFATGTKLQVHKVTH), 202-224 (FTCEKCGKSFTQKTNLNTHQLTH), 230-252 (FKCEECGKCFSRKDYLRVHQRFH), and 258-280 (YKCNECEESFCRKDLLQTHELSH).

Belongs to the krueppel C2H2-type zinc-finger protein family.

The protein localises to the nucleus. In terms of biological role, may be involved in transcriptional regulation. This chain is Gastrula zinc finger protein XlCGF46.1, found in Xenopus laevis (African clawed frog).